A 170-amino-acid chain; its full sequence is Translocon-associated protein subunit gamma (170 aa).

At 1-24 (MAEVDEFSAFRHENDVSIEQRIVY) the chain is on the lumenal side. A helical transmembrane segment spans residues 25–45 (FINSLIVALVPVYLYHAIFFM). Topologically, residues 46 to 51 (SIDDHM) are cytoplasmic. Residues 52–72 (IIYGSVTLFAAIVLTFAYNNI) form a helical membrane-spanning segment. Residues 73–121 (YRMKRLKLSASREHISIASKNKVGDKKKFAAAQKEVQALVTSHEAIAAS) lie on the Lumenal side of the membrane. The helical transmembrane segment at 122–141 (IMYNNAVFLICVSIFSFIIF) threads the bilayer. The Cytoplasmic segment spans residues 142-145 (KNVP). A helical transmembrane segment spans residues 146-168 (LVYNYIISISLGAGLTSFLSTSS).

The protein belongs to the TRAP-gamma family. Heterotrimer of TRAP-alpha, TRAP-beta and TRAP-gamma.

Its subcellular location is the endoplasmic reticulum membrane. Its function is as follows. TRAP proteins are part of a complex whose function is to bind calcium to the ER membrane and thereby regulate the retention of ER resident proteins. This chain is Translocon-associated protein subunit gamma (ssr3), found in Dictyostelium discoideum (Social amoeba).